The primary structure comprises 137 residues: Protein PsiE homolog (137 aa).

The next 4 helical transmembrane spans lie at 13 to 35, 55 to 77, 84 to 103, and 107 to 129; these read ILLR…AFLI, YYMT…IVKY, FPLR…FIIV, and SATS…FLAN.

Belongs to the PsiE family.

It is found in the cell membrane. The chain is Protein PsiE homolog from Listeria monocytogenes serotype 4b (strain F2365).